A 143-amino-acid chain; its full sequence is Large ribosomal subunit protein uL16 (143 aa).

The span at Met-1–Ile-17 shows a compositional bias: basic residues. Residues Met-1 to Ala-21 are disordered.

This sequence belongs to the universal ribosomal protein uL16 family. Part of the 50S ribosomal subunit.

Functionally, binds 23S rRNA and is also seen to make contacts with the A and possibly P site tRNAs. The sequence is that of Large ribosomal subunit protein uL16 from Rhizorhabdus wittichii (strain DSM 6014 / CCUG 31198 / JCM 15750 / NBRC 105917 / EY 4224 / RW1) (Sphingomonas wittichii).